The sequence spans 230 residues: Phosphoribosylformylglycinamidine synthase subunit PurQ (230 aa).

The region spanning 2–226 (RVAVIVFPGS…LKTWREQNSV (225 aa)) is the Glutamine amidotransferase type-1 domain. The active-site Nucleophile is Cys86. Residues His195 and Glu197 contribute to the active site.

In terms of assembly, part of the FGAM synthase complex composed of 1 PurL, 1 PurQ and 2 PurS subunits.

The protein resides in the cytoplasm. It carries out the reaction N(2)-formyl-N(1)-(5-phospho-beta-D-ribosyl)glycinamide + L-glutamine + ATP + H2O = 2-formamido-N(1)-(5-O-phospho-beta-D-ribosyl)acetamidine + L-glutamate + ADP + phosphate + H(+). It catalyses the reaction L-glutamine + H2O = L-glutamate + NH4(+). It participates in purine metabolism; IMP biosynthesis via de novo pathway; 5-amino-1-(5-phospho-D-ribosyl)imidazole from N(2)-formyl-N(1)-(5-phospho-D-ribosyl)glycinamide: step 1/2. Functionally, part of the phosphoribosylformylglycinamidine synthase complex involved in the purines biosynthetic pathway. Catalyzes the ATP-dependent conversion of formylglycinamide ribonucleotide (FGAR) and glutamine to yield formylglycinamidine ribonucleotide (FGAM) and glutamate. The FGAM synthase complex is composed of three subunits. PurQ produces an ammonia molecule by converting glutamine to glutamate. PurL transfers the ammonia molecule to FGAR to form FGAM in an ATP-dependent manner. PurS interacts with PurQ and PurL and is thought to assist in the transfer of the ammonia molecule from PurQ to PurL. In Brevibacillus brevis (strain 47 / JCM 6285 / NBRC 100599), this protein is Phosphoribosylformylglycinamidine synthase subunit PurQ.